Here is a 152-residue protein sequence, read N- to C-terminus: Transcriptional repressor NrdR (152 aa).

Residues 3-34 (CPFCNHGELKVIDSRNAPEANAIKRRRECLNC) fold into a zinc finger. The ATP-cone domain maps to 48–138 (LQVLKRDGRY…VYRRFKDVGE (91 aa)).

It belongs to the NrdR family. Zn(2+) serves as cofactor.

In terms of biological role, negatively regulates transcription of bacterial ribonucleotide reductase nrd genes and operons by binding to NrdR-boxes. The polypeptide is Transcriptional repressor NrdR (Chlamydia abortus (strain DSM 27085 / S26/3) (Chlamydophila abortus)).